Here is a 360-residue protein sequence, read N- to C-terminus: Peptide chain release factor 1 (360 aa).

At Gln-235 the chain carries N5-methylglutamine. Positions 284–303 (RERQSKEAAERKSLVGSGDR) are disordered.

Belongs to the prokaryotic/mitochondrial release factor family. Methylated by PrmC. Methylation increases the termination efficiency of RF1.

The protein resides in the cytoplasm. Functionally, peptide chain release factor 1 directs the termination of translation in response to the peptide chain termination codons UAG and UAA. The polypeptide is Peptide chain release factor 1 (Bordetella avium (strain 197N)).